The chain runs to 449 residues: MGKEKVHMNLVVVGHVDAGKSTATGHLIYKCGGIDKRTIEKFEKEAADIGKASFKYAWVLDKLKAERERGITIDIALWKFESPKSVFTIIDAPGHRDFIKNMITGTSQADAAILIIASAQGEFEAGISKDGQTREHALLAFTLGVKQMVVCCNKMDDKTVNYGQERYDEIVKEVSAYIKKVGYNVEKVRFVPISGWQGDNMIEKSEKMPWYKGPTLLEALDMLEPPVRPSDKPLRLPLQDVYKIGGIGTVPVGRVETGVMKPGDVVTFAPANVTTEVKSIEMHHEQLAEATPGDNVGFNVKNVSVKDIRRGNVCGNTKNDPPKEAADFTAQVIILNHPGQIGNGYAPVLDCHTSHIACKFAEIESKIDRRSGKELEKAPKSIKSGDAAIVRMVPQKPMCVEVFNDYAPLGRFAVRDMRQTVAVGIIKAVTKKDGSGGKVTKAAVKASKK.

Residues 5 to 230 (KVHMNLVVVG…DMLEPPVRPS (226 aa)) enclose the tr-type G domain. The G1 stretch occupies residues 14 to 21 (GHVDAGKS). Position 14–21 (14–21 (GHVDAGKS)) interacts with GTP. Residues 70-74 (GITID) are G2. Residues 91-94 (DAPG) form a G3 region. GTP is bound by residues 91–95 (DAPGH) and 153–156 (NKMD). The tract at residues 153-156 (NKMD) is G4. A G5 region spans residues 194–196 (SGW). 5-glutamyl glycerylphosphorylethanolamine is present on glutamate 362.

This sequence belongs to the TRAFAC class translation factor GTPase superfamily. Classic translation factor GTPase family. EF-Tu/EF-1A subfamily. In terms of processing, phosphatidylethanolamine (PE) is a direct precursor of the ethanolamine-phosphoglycerol (EPG) moiety.

It localises to the cytoplasm. In terms of biological role, this protein promotes the GTP-dependent binding of aminoacyl-tRNA to the A-site of ribosomes during protein biosynthesis. The sequence is that of Elongation factor 1-alpha 1 (TEF1) from Trypanosoma brucei brucei (strain 927/4 GUTat10.1).